We begin with the raw amino-acid sequence, 184 residues long: Dirigent protein 14 (184 aa).

Residues 1–20 (MANQIYLFSLICLSVLLCQS) form the signal peptide. Residues cysteine 36 and cysteine 182 are joined by a disulfide bond. Asparagine 55 and asparagine 119 each carry an N-linked (GlcNAc...) asparagine glycan.

Belongs to the plant dirigent protein family. In terms of assembly, homodimer.

Its subcellular location is the secreted. The protein localises to the extracellular space. It localises to the apoplast. In terms of biological role, dirigent proteins impart stereoselectivity on the phenoxy radical-coupling reaction, yielding optically active lignans from two molecules of coniferyl alcohol in the biosynthesis of lignans, flavonolignans, and alkaloids and thus plays a central role in plant secondary metabolism. This is Dirigent protein 14 (DIR14) from Arabidopsis thaliana (Mouse-ear cress).